Reading from the N-terminus, the 227-residue chain is DNA repair protein RecO (227 aa).

This sequence belongs to the RecO family.

Involved in DNA repair and RecF pathway recombination. In Pseudomonas putida (strain W619), this protein is DNA repair protein RecO.